Consider the following 266-residue polypeptide: MPASFPLLAVDIGNTSTVLGLADESLSLTHTWRIRTNRDLLPDDLALQLHGLFTLAGAPMPRAAVLSSVAPPLGANYAFALRRHFRVDAFEVAAENLPDVTVELDQPGSIGADRLCNLFGAERYLDAYEYAVVVDFGTSTNFDVIARGRRFLGGILATGAQVSADALFARAAKLPRITLEAPARAIGQNTVHALQSGLVFGYAEMVDGLLRRVRAELPAPAVAIATGGFARTIEGICREIDFYDETLTLRGLVELWASREAVGKGL.

11–18 (DIGNTSTV) is an ATP binding site. 111 to 114 (GADR) serves as a coordination point for substrate. The active-site Proton acceptor is aspartate 113. Residue aspartate 135 coordinates K(+). Threonine 138 lines the ATP pocket. Substrate is bound at residue threonine 190.

Belongs to the type III pantothenate kinase family. Homodimer. The cofactor is NH4(+). Requires K(+) as cofactor.

It localises to the cytoplasm. It catalyses the reaction (R)-pantothenate + ATP = (R)-4'-phosphopantothenate + ADP + H(+). It participates in cofactor biosynthesis; coenzyme A biosynthesis; CoA from (R)-pantothenate: step 1/5. Catalyzes the phosphorylation of pantothenate (Pan), the first step in CoA biosynthesis. The polypeptide is Type III pantothenate kinase (Deinococcus geothermalis (strain DSM 11300 / CIP 105573 / AG-3a)).